The chain runs to 473 residues: Bifunctional protein HldE (473 aa).

The ribokinase stretch occupies residues 1–316; sequence MILPDFSLAR…AIAIHGQRAP (316 aa). Residue 193-196 participates in ATP binding; that stretch reads NLSE. Asp-262 is an active-site residue. Positions 342–473 are cytidylyltransferase; that stretch reads VTNGCFDLLH…TRIIEAIRNG (132 aa).

This sequence in the N-terminal section; belongs to the carbohydrate kinase PfkB family. In the C-terminal section; belongs to the cytidylyltransferase family. In terms of assembly, homodimer.

The enzyme catalyses D-glycero-beta-D-manno-heptose 7-phosphate + ATP = D-glycero-beta-D-manno-heptose 1,7-bisphosphate + ADP + H(+). The catalysed reaction is D-glycero-beta-D-manno-heptose 1-phosphate + ATP + H(+) = ADP-D-glycero-beta-D-manno-heptose + diphosphate. The protein operates within nucleotide-sugar biosynthesis; ADP-L-glycero-beta-D-manno-heptose biosynthesis; ADP-L-glycero-beta-D-manno-heptose from D-glycero-beta-D-manno-heptose 7-phosphate: step 1/4. Its pathway is nucleotide-sugar biosynthesis; ADP-L-glycero-beta-D-manno-heptose biosynthesis; ADP-L-glycero-beta-D-manno-heptose from D-glycero-beta-D-manno-heptose 7-phosphate: step 3/4. Its function is as follows. Catalyzes the phosphorylation of D-glycero-D-manno-heptose 7-phosphate at the C-1 position to selectively form D-glycero-beta-D-manno-heptose-1,7-bisphosphate. In terms of biological role, catalyzes the ADP transfer from ATP to D-glycero-beta-D-manno-heptose 1-phosphate, yielding ADP-D-glycero-beta-D-manno-heptose. The chain is Bifunctional protein HldE from Methylococcus capsulatus (strain ATCC 33009 / NCIMB 11132 / Bath).